The primary structure comprises 563 residues: DEAD-box ATP-dependent RNA helicase 25 (563 aa).

Residues 21–57 (KKLTSDEDGSGKLVKDNNKSLKRGREGKSDVDEPLIK) are disordered. The span at 23 to 56 (LTSDEDGSGKLVKDNNKSLKRGREGKSDVDEPLI) shows a compositional bias: basic and acidic residues. Ser25 is subject to Phosphoserine. The Q motif signature appears at 80–108 (TRFDQFPLSPLTLKGIEDAGFKTMTVVQE). The 184-residue stretch at 111–294 (LPLILQGKDI…HVALKRDHEF (184 aa)) folds into the Helicase ATP-binding domain. 124–131 (AKTGTGKT) contributes to the ATP binding site. The DEAD box motif lies at 242–245 (DEAD). Positions 328–479 (LLKKHITDNV…AVKKVQKGLI (152 aa)) constitute a Helicase C-terminal domain.

This sequence belongs to the DEAD box helicase family.

The catalysed reaction is ATP + H2O = ADP + phosphate + H(+). This is DEAD-box ATP-dependent RNA helicase 25 (RH25) from Arabidopsis thaliana (Mouse-ear cress).